A 1173-amino-acid chain; its full sequence is DNA polymerase III subunit alpha (1173 aa).

It belongs to the DNA polymerase type-C family. DnaE subfamily. In terms of assembly, DNA polymerase III contains a core (composed of alpha, epsilon and theta chains) that associates with a tau subunit. This core dimerizes to form the PolIII' complex. PolIII' associates with the gamma complex (composed of gamma, delta, delta', psi and chi chains) and with the beta chain to form the complete DNA polymerase III complex.

The protein localises to the cytoplasm. The catalysed reaction is DNA(n) + a 2'-deoxyribonucleoside 5'-triphosphate = DNA(n+1) + diphosphate. DNA polymerase III is a complex, multichain enzyme responsible for most of the replicative synthesis in bacteria. This DNA polymerase also exhibits 3' to 5' exonuclease activity. The alpha chain is the DNA polymerase. This chain is DNA polymerase III subunit alpha (dnaE), found in Pseudomonas fluorescens.